A 46-amino-acid chain; its full sequence is Protein krueppel (46 aa).

C2H2-type zinc fingers lie at residues 1-4 (MRLH), 10-32 (YHCT…LRVH), and 38-46 (YACELCTSK).

Belongs to the krueppel C2H2-type zinc-finger protein family.

The protein resides in the nucleus. In terms of biological role, krueppel is a gap class segmentation protein. The protein is Protein krueppel (Kr) of Lithobius forficatus (Centipede).